Here is a 226-residue protein sequence, read N- to C-terminus: PDGF-related-transforming protein sis (226 aa).

The span at arginine 201 to histidine 215 shows a compositional bias: basic residues. The disordered stretch occupies residues arginine 201–alanine 226.

This sequence belongs to the PDGF/VEGF growth factor family.

In Woolly monkey sarcoma virus (WMSV), this protein is PDGF-related-transforming protein sis (V-SIS).